A 329-amino-acid polypeptide reads, in one-letter code: GTPase Obg (329 aa).

The 159-residue stretch at 2–160 (YNFKDSVSIT…LNVRLELFLV (159 aa)) folds into the Obg domain. The region spanning 161–327 (ADIGLVGPPN…LIKEFFILAK (167 aa)) is the OBG-type G domain. GTP is bound by residues 167–174 (GPPNAGKS), 192–196 (FTTKI), 213–216 (DIPG), 280–283 (NKLD), and 308–310 (SIY). Mg(2+) is bound by residues Ser-174 and Thr-194.

The protein belongs to the TRAFAC class OBG-HflX-like GTPase superfamily. OBG GTPase family. Monomer. Requires Mg(2+) as cofactor.

The protein resides in the cytoplasm. In terms of biological role, an essential GTPase which binds GTP, GDP and possibly (p)ppGpp with moderate affinity, with high nucleotide exchange rates and a fairly low GTP hydrolysis rate. Plays a role in control of the cell cycle, stress response, ribosome biogenesis and in those bacteria that undergo differentiation, in morphogenesis control. This chain is GTPase Obg, found in Borrelia garinii subsp. bavariensis (strain ATCC BAA-2496 / DSM 23469 / PBi) (Borreliella bavariensis).